Consider the following 284-residue polypeptide: Polyamine aminopropyltransferase (284 aa).

The 237-residue stretch at 6–242 (KGWFTEVCKE…GWWSATLAGH (237 aa)) folds into the PABS domain. Residue Gln-36 coordinates S-methyl-5'-thioadenosine. Residues His-67 and Asp-91 each coordinate spermidine. S-methyl-5'-thioadenosine is bound by residues Glu-111 and 142–143 (DG). Asp-161 serves as the catalytic Proton acceptor. A spermidine-binding site is contributed by 161-164 (DSTD).

The protein belongs to the spermidine/spermine synthase family. As to quaternary structure, homodimer or homotetramer.

The protein resides in the cytoplasm. It catalyses the reaction S-adenosyl 3-(methylsulfanyl)propylamine + putrescine = S-methyl-5'-thioadenosine + spermidine + H(+). The protein operates within amine and polyamine biosynthesis; spermidine biosynthesis; spermidine from putrescine: step 1/1. Catalyzes the irreversible transfer of a propylamine group from the amino donor S-adenosylmethioninamine (decarboxy-AdoMet) to putrescine (1,4-diaminobutane) to yield spermidine. This chain is Polyamine aminopropyltransferase, found in Nitrosococcus oceani (strain ATCC 19707 / BCRC 17464 / JCM 30415 / NCIMB 11848 / C-107).